The following is a 206-amino-acid chain: Uridine kinase (206 aa).

9–16 (GGSGSGKT) provides a ligand contact to ATP.

The protein belongs to the uridine kinase family.

It is found in the cytoplasm. It catalyses the reaction uridine + ATP = UMP + ADP + H(+). The enzyme catalyses cytidine + ATP = CMP + ADP + H(+). It participates in pyrimidine metabolism; CTP biosynthesis via salvage pathway; CTP from cytidine: step 1/3. Its pathway is pyrimidine metabolism; UMP biosynthesis via salvage pathway; UMP from uridine: step 1/1. The sequence is that of Uridine kinase from Borrelia garinii subsp. bavariensis (strain ATCC BAA-2496 / DSM 23469 / PBi) (Borreliella bavariensis).